The sequence spans 391 residues: Cold-shock protein CS120 (391 aa).

17 consecutive repeat copies span residues 9 to 31 (GEKKGIMEKIKEKLPGGHGDHKE), 49 to 62 (TGGAYGQQGHAGTT), 72 to 94 (GEKKGVMENIKDKLPGGHQDHQQ), 95 to 108 (TGGTYGQQGHTGTA), 115 to 128 (TGGTYGQQGHTGTA), 135 to 148 (TGGTYGEQGHTGVT), 156 to 178 (GEKKGVMENIKEKLPGGHGDHQQ), 179 to 192 (TGGTYGQQGHTGTA), 199 to 212 (GGGTYEQHGHTGMT), 220 to 242 (GEKKGVMENIKDKLPGGHGDHQQ), 243 to 256 (TGGTYGQQGHTGTA), 263 to 276 (GGGTYEQHGHTGMT), 284 to 306 (GEKKGVMENIKEKLPGGHSDHQQ), 307 to 320 (TGGAYGQQGHTGTA), 327 to 340 (GGGTYGQHGHAGVI), 350 to 363 (TGGTHGQHGHTGTT), and 374 to 391 (GEKKSLMDKIKDKLPGQH). Residues 9 to 391 (GEKKGIMEKI…KIKDKLPGQH (383 aa)) are 6 X 23 AA approximate repeats. Residues 21-33 (KLPGGHGDHKETA) show a composition bias toward basic and acidic residues. Residues 21 to 391 (KLPGGHGDHK…KIKDKLPGQH (371 aa)) are disordered. Residues 34 to 59 (GTHGHPGTATHGAPATGGAYGQQGHA) show a composition bias toward low complexity. An 11 X 14 AA approximate repeats region spans residues 49–363 (TGGAYGQQGH…HGQHGHTGTT (315 aa)). The span at 70 to 92 (HAGEKKGVMENIKDKLPGGHQDH) shows a compositional bias: basic and acidic residues. The span at 93 to 145 (QQTGGTYGQQGHTGTATHGTPATGGTYGQQGHTGTATHGTPATGGTYGEQGHT) shows a compositional bias: low complexity. Residues 155–176 (TGEKKGVMENIKEKLPGGHGDH) are compositionally biased toward basic and acidic residues. The span at 177-196 (QQTGGTYGQQGHTGTATHGT) shows a compositional bias: low complexity. The span at 219 to 240 (TGEKKGVMENIKDKLPGGHGDH) shows a compositional bias: basic and acidic residues. Composition is skewed to low complexity over residues 241–260 (QQTGGTYGQQGHTGTATQGT) and 272–282 (HTGMTGAGTHS). The span at 283–304 (TGEKKGVMENIKEKLPGGHSDH) shows a compositional bias: basic and acidic residues. Composition is skewed to low complexity over residues 305–324 (QQTGGAYGQQGHTGTATHGT) and 333–351 (QHGHAGVIGTETHGTTATG). Residues 361–372 (GTTGTGTHGSDG) show a composition bias toward gly residues. Residues 373–391 (IGEKKSLMDKIKDKLPGQH) show a composition bias toward basic and acidic residues.

The protein belongs to the plant dehydrin family.

In terms of biological role, may reduce intracellular freezing damage during winter by hydrogen-bonding to the lattice of the nascent ice crystals, thus modifying the structure and/or propagation of ice crystals. The polypeptide is Cold-shock protein CS120 (CS120) (Triticum aestivum (Wheat)).